A 315-amino-acid chain; its full sequence is Porphobilinogen deaminase (315 aa).

Position 234 is an S-(dipyrrolylmethanemethyl)cysteine (C234).

This sequence belongs to the HMBS family. Monomer. Dipyrromethane serves as cofactor.

It carries out the reaction 4 porphobilinogen + H2O = hydroxymethylbilane + 4 NH4(+). Its pathway is porphyrin-containing compound metabolism; protoporphyrin-IX biosynthesis; coproporphyrinogen-III from 5-aminolevulinate: step 2/4. Functionally, tetrapolymerization of the monopyrrole PBG into the hydroxymethylbilane pre-uroporphyrinogen in several discrete steps. The sequence is that of Porphobilinogen deaminase from Mycobacterium avium (strain 104).